A 340-amino-acid chain; its full sequence is Probable serine acetyltransferase 5 (340 aa).

2 stretches are compositionally biased toward low complexity: residues methionine 1–alanine 17 and proline 54–proline 64. The interval methionine 1–glutamate 67 is disordered.

The protein belongs to the transferase hexapeptide repeat family. Homomultimer.

It catalyses the reaction L-serine + acetyl-CoA = O-acetyl-L-serine + CoA. It functions in the pathway amino-acid biosynthesis; L-cysteine biosynthesis; L-cysteine from L-serine: step 1/2. The sequence is that of Probable serine acetyltransferase 5 (SAT5) from Oryza sativa subsp. japonica (Rice).